Reading from the N-terminus, the 599-residue chain is Elongation factor 4 (599 aa).

The tr-type G domain occupies 5–187 (AHIRNFSIVA…AIVKHLPAPK (183 aa)). GTP-binding positions include 17–22 (DHGKST) and 134–137 (NKID).

It belongs to the TRAFAC class translation factor GTPase superfamily. Classic translation factor GTPase family. LepA subfamily.

The protein localises to the cell inner membrane. The catalysed reaction is GTP + H2O = GDP + phosphate + H(+). Required for accurate and efficient protein synthesis under certain stress conditions. May act as a fidelity factor of the translation reaction, by catalyzing a one-codon backward translocation of tRNAs on improperly translocated ribosomes. Back-translocation proceeds from a post-translocation (POST) complex to a pre-translocation (PRE) complex, thus giving elongation factor G a second chance to translocate the tRNAs correctly. Binds to ribosomes in a GTP-dependent manner. In Ruegeria pomeroyi (strain ATCC 700808 / DSM 15171 / DSS-3) (Silicibacter pomeroyi), this protein is Elongation factor 4.